Reading from the N-terminus, the 289-residue chain is MIIDRLFNEVEKKGNVCVGLDTHLDYIPVNLKEKYQDIDEILFEFNKEIIDKTYDLVPVYKLQIAYYEAYGIKGLLGYKKTIEYLRSIKKITIGDIKRGDISSTAQMYAKAHFEGEFEVDFVTLNPYLGFDSLTPYLKYIESGEKGVFVLLRTSNPGAKDIQYLKVSPKDEYLYYIVGDKLNEIGVKYRGSCGYSSIGAVVGGTHIEEAKEIRNRYKNMFFLIPGYGHQGATGKDVSLYLNKGNGGVINSSRGIITAYKNYKDGDQRFADYARKAVLDMREDIQSERGV.

The Proton donor role is filled by K97.

This sequence belongs to the OMP decarboxylase family. Type 2 subfamily.

It carries out the reaction orotidine 5'-phosphate + H(+) = UMP + CO2. It functions in the pathway pyrimidine metabolism; UMP biosynthesis via de novo pathway; UMP from orotate: step 2/2. This chain is Orotidine 5'-phosphate decarboxylase, found in Petrotoga mobilis (strain DSM 10674 / SJ95).